Reading from the N-terminus, the 1149-residue chain is DNA polymerase (1149 aa).

Positions 1–28 are enriched in polar residues; sequence MSLVQSHGTSGLFTEPPNSINQQESSGP. The disordered stretch occupies residues 1 to 49; the sequence is MSLVQSHGTSGLFTEPPNSINQQESSGPSLPAQDATQASASSARAGATP. The segment covering 31-49 has biased composition (low complexity); it reads PAQDATQASASSARAGATP.

Belongs to the DNA polymerase type-B family. Heterodimer with the terminal protein; this heterodimer binds to bp 9 to 18 of the genome. Forms a complex with viral pTP, DBP and hosts NFIA and POU2F1/OCT1 for initiation of replication.

The protein resides in the host nucleus. The catalysed reaction is DNA(n) + a 2'-deoxyribonucleoside 5'-triphosphate = DNA(n+1) + diphosphate. Functionally, eukaryotic-type DNA polymerase involved in viral genomic replication. DNA synthesis is protein primed, and acts in a strand displacement replication. Assembles in complex with viral pTP, DBP, host NFIA and host POU2F1/OCT1 on viral origin of replication. The polymerase covalently transfers dCMP onto pTP, thereby initiating complementary strand synthesis. The chain is DNA polymerase from Canine adenovirus serotype 1 (strain CLL) (CAdV-1).